Reading from the N-terminus, the 579-residue chain is Protein inscuteable homolog (579 aa).

The important for interaction with GPSM2 stretch occupies residues 74 to 89 (SVQRWMEDLKLMTECE). Residues 576–579 (ESFV) carry the PDZ-binding motif.

As to quaternary structure, interacts with ALS2CR19/PAR3B and F2RL2/PAR3. Interacts with GPSM1/AGS3 and GPSM2/LGN (via TPR repeat region). Identified in a complex with GPSM2 and F2RL2. Isoform 1 is expressed in various tissues with stronger expression in liver, kidney and small intestine. Isoform 2 is abundantly expressed in small intestine and to a lower extent in lung and pancreas.

Its subcellular location is the cytoplasm. The protein localises to the cell cortex. Functionally, may function as an adapter linking the Par3 complex to the GPSM1/GPSM2 complex. Involved in spindle orientation during mitosis. May regulate cell proliferation and differentiation in the developing nervous system. May play a role in the asymmetric division of fibroblasts and participate in the process of stratification of the squamous epithelium. This is Protein inscuteable homolog (INSC) from Homo sapiens (Human).